Reading from the N-terminus, the 485-residue chain is Sodium-coupled neutral amino acid symporter 1 (485 aa).

The Cytoplasmic portion of the chain corresponds to 1–74 (MMHFKSGLEL…EYIPGTTSLG (74 aa)). At Ser-6 the chain carries Phosphoserine. Thr-11 is subject to Phosphothreonine. Phosphoserine is present on residues Ser-25, Ser-28, Ser-49, and Ser-52. Residue Thr-54 is modified to Phosphothreonine. A Phosphoserine modification is found at Ser-56. Residues 75–97 (MSVFNLSNAIMGSGILGLAFALA) form a helical membrane-spanning segment. Topologically, residues 98–112 (NTGILLFLILLTSVT) are extracellular. Residues 113-133 (LLSIYSINLLLICSKETGCMV) form a helical membrane-spanning segment. The Cytoplasmic segment spans residues 134-148 (YEKLGEQVFGTTGKL). A helical membrane pass occupies residues 149 to 169 (VIFGATSLQNTGAMLSYLFIV). At 170-188 (KNELPSAIKSLMGEEETFS) the chain is on the extracellular side. A helical membrane pass occupies residues 189-211 (AWYVDGRVLVVMVTFGIILPLCL). The Cytoplasmic segment spans residues 212-216 (LKNLG). Residues 217-237 (YLGYTSGFSLSCMVFFLIVVI) form a helical membrane-spanning segment. Residues 238-273 (YKKFQIPCMNGEQNSTVSANVTDACTPKYVTFNSKT) lie on the Extracellular side of the membrane. Cys-245 and Cys-262 are joined by a disulfide. Residues Asn-251 and Asn-257 are each glycosylated (N-linked (GlcNAc...) asparagine). Residues 274–294 (VYALPTIAFAFVCHPSVLPIY) traverse the membrane as a helical segment. Residues 295–310 (SELKDRSQKKMQMVSN) are Cytoplasmic-facing. The chain crosses the membrane as a helical span at residues 311 to 331 (ISFFAMFVMYFLTAIFGYLTF). Topologically, residues 332–348 (YEKVQSDLLHKYQSTGD) are extracellular. Residues 349–369 (ILILTVRLAVIVAVILTVPVL) form a helical membrane-spanning segment. Over 370-391 (FFTVRSSLFELAKKTKFHLCRH) the chain is Cytoplasmic. Residues 392–412 (VLVTIILLVIINLLVIFIPSM) form a helical membrane-spanning segment. Topologically, residues 413–414 (KD) are extracellular. A helical transmembrane segment spans residues 415 to 435 (IFGVVGVTSANMLIFILPSSL). Topologically, residues 436–450 (YLKITNQDGDKNTQR) are cytoplasmic. Residues 451–471 (IWAALFLALGVLFSLISIPLV) traverse the membrane as a helical segment. The Extracellular portion of the chain corresponds to 472–485 (IYDWACSSSNGEGH).

Belongs to the amino acid/polyamine transporter 2 family. In terms of processing, N-glycosylation plays an important role in the L-glutamine transport. As to expression, specifically expressed in brain with the highest levels in cerebellum and thalamus (at protein level). Expressed in glutamatergic, GABAergic and a subset of dopaminergic neurons of the substantia nigra and cholinergic motoneurons (at protein level). Also expressed by ependymal cells lining the ventricle (at protein level). Expression is also detected in spinal cord, heart, colon and placenta.

Its subcellular location is the cell membrane. It carries out the reaction L-glutamine(in) + Na(+)(in) = L-glutamine(out) + Na(+)(out). The enzyme catalyses L-alanine(in) + Na(+)(in) = L-alanine(out) + Na(+)(out). It catalyses the reaction L-asparagine(in) + Na(+)(in) = L-asparagine(out) + Na(+)(out). The catalysed reaction is L-histidine(in) + Na(+)(in) = L-histidine(out) + Na(+)(out). It carries out the reaction L-serine(in) + Na(+)(in) = L-serine(out) + Na(+)(out). The enzyme catalyses L-cysteine(in) + Na(+)(in) = L-cysteine(out) + Na(+)(out). It catalyses the reaction L-methionine(in) + Na(+)(in) = L-methionine(out) + Na(+)(out). The catalysed reaction is glycine(in) + Na(+)(in) = glycine(out) + Na(+)(out). It carries out the reaction L-threonine(in) + Na(+)(in) = L-threonine(out) + Na(+)(out). The enzyme catalyses L-proline(in) + Na(+)(in) = L-proline(out) + Na(+)(out). Its activity is regulated as follows. Inhibited by alpha-(methylamino)isobutyric acid (MeAIB). Inhibited by lithium, potassium, choline ions, N-methylglucamine. The pH dependence has an allosteric effect on the transport. Its function is as follows. Symporter that cotransports short-chain neutral amino acids and sodium ions from the extraccellular to the intracellular side of the cell membrane. The transport is elctrogenic, pH dependent and driven by the Na(+) electrochemical gradient. Participates in the astroglia-derived glutamine transport into GABAergic interneurons for neurotransmitter GABA de novo synthesis. May also contributes to amino acid transport in placental trophoblast. Regulates synaptic plasticity. This is Sodium-coupled neutral amino acid symporter 1 from Rattus norvegicus (Rat).